The chain runs to 241 residues: Queuine tRNA-ribosyltransferase-like protein (241 aa).

This sequence belongs to the queuine tRNA-ribosyltransferase family.

The protein is Queuine tRNA-ribosyltransferase-like protein of Plasmodium falciparum.